Consider the following 148-residue polypeptide: Arginine repressor (148 aa).

This sequence belongs to the ArgR family.

It localises to the cytoplasm. It functions in the pathway amino-acid biosynthesis; L-arginine biosynthesis [regulation]. Regulates arginine biosynthesis genes. The chain is Arginine repressor from Chlorobium limicola (strain DSM 245 / NBRC 103803 / 6330).